The chain runs to 131 residues: Biogenesis of lysosome-related organelles complex 1 subunit CNL1 (131 aa).

The segment at 1 to 29 (MSAPDSNSGHAHDSAQNEGAAEGTRDPFG) is disordered. A coiled-coil region spans residues 73–101 (DAIDINIEEMRRILQKCEELETHFDMLDQ).

Belongs to the BLOC1S4 family. Component of the biogenesis of lysosome-related organelles complex-1 (BLOC-1).

The protein localises to the cytoplasm. In terms of biological role, component of the biogenesis of lysosome-related organelles complex-1 (BLOC-1), a complex that is involved in endosomal cargo sorting. The chain is Biogenesis of lysosome-related organelles complex 1 subunit CNL1 (CLN1) from Lachancea thermotolerans (strain ATCC 56472 / CBS 6340 / NRRL Y-8284) (Yeast).